We begin with the raw amino-acid sequence, 461 residues long: Mannose-6-phosphate isomerase (461 aa).

4 residues coordinate Zn(2+): Gln-107, His-109, Glu-134, and His-291. Arg-310 is a catalytic residue.

The protein belongs to the mannose-6-phosphate isomerase type 1 family. Zn(2+) is required as a cofactor.

It localises to the cytoplasm. The enzyme catalyses D-mannose 6-phosphate = D-fructose 6-phosphate. The protein operates within nucleotide-sugar biosynthesis; GDP-alpha-D-mannose biosynthesis; alpha-D-mannose 1-phosphate from D-fructose 6-phosphate: step 1/2. Functionally, involved in the synthesis of the GDP-mannose and dolichol-phosphate-mannose required for a number of critical mannosyl transfer reactions. The chain is Mannose-6-phosphate isomerase (manA) from Emericella nidulans (strain FGSC A4 / ATCC 38163 / CBS 112.46 / NRRL 194 / M139) (Aspergillus nidulans).